We begin with the raw amino-acid sequence, 312 residues long: Protein YIPF2 (312 aa).

N-acetylalanine is present on Ala2. Over 2 to 121 (AAADELAFHE…LRNRPDLYGP (120 aa)) the chain is Cytoplasmic. The chain crosses the membrane as a helical span at residues 122–142 (FWICATLAFVLAVTGNLTLVL). Over 143–160 (AQRRDPSIHYSPQFHKVT) the chain is Lumenal. The helical transmembrane segment at 161–181 (IAGITIYCYAWLVPLALWGFL) threads the bilayer. Topologically, residues 182 to 193 (RWRQGTRERMGL) are cytoplasmic. Residues 194 to 216 (YTFLETVCVYGYSLFVFIPTVVL) traverse the membrane as a helical segment. At 217–228 (WLIPVQWIQWLF) the chain is on the lumenal side. The chain crosses the membrane as a helical span at residues 229-249 (GALGLALSAAGLVFTLWPVVR). Over 250–253 (EDTR) the chain is Cytoplasmic. Residues 254–274 (LVAAALLSTVVLLHALLALGC) form a helical membrane-spanning segment. The Lumenal segment spans residues 275-312 (KLYFFQPLPLDHVVPAPQATPPSPNVLLPSSIQPMTTS).

This sequence belongs to the YIP1 family. As to quaternary structure, interacts with YIPF6; this interaction may stabilize YIPF2. May also form a ternary complex with YIPF1 and YIPF6.

The protein localises to the golgi apparatus. It localises to the cis-Golgi network membrane. It is found in the trans-Golgi network membrane. Its subcellular location is the late endosome membrane. The chain is Protein YIPF2 (Yipf2) from Mus musculus (Mouse).